Consider the following 336-residue polypeptide: Probable long-chain-alcohol O-fatty-acyltransferase 8 (336 aa).

The next 8 helical transmembrane spans lie at 7–27 (SFVK…YIPS), 38–58 (SVLP…FTIF), 59–79 (SSTT…LFAF), 82–102 (GPLL…CLPI), 117–135 (WVFF…VHNY), 152–172 (LYLV…IILG), 228–248 (MGCW…YFYI), and 284–304 (PMLS…FLFF).

This sequence belongs to the wax synthase family.

The protein localises to the membrane. The catalysed reaction is a long chain fatty alcohol + a fatty acyl-CoA = a wax ester + CoA. Catalyzes the final step in the synthesis of long-chain linear esters (waxes). This is Probable long-chain-alcohol O-fatty-acyltransferase 8 from Arabidopsis thaliana (Mouse-ear cress).